We begin with the raw amino-acid sequence, 364 residues long: sn-glycerol-3-phosphate import ATP-binding protein UgpC (364 aa).

Positions 4-235 constitute an ABC transporter domain; the sequence is VVLRNVRKTY…PATTFVASFI (232 aa). 37-44 lines the ATP pocket; the sequence is GPSGCGKS.

Belongs to the ABC transporter superfamily. sn-glycerol-3-phosphate importer (TC 3.A.1.1.3) family. The complex is composed of two ATP-binding proteins (UgpC), two transmembrane proteins (UgpA and UgpE) and a solute-binding protein (UgpB).

Its subcellular location is the cell inner membrane. It carries out the reaction sn-glycerol 3-phosphate(out) + ATP + H2O = sn-glycerol 3-phosphate(in) + ADP + phosphate + H(+). Its function is as follows. Part of the ABC transporter complex UgpBAEC involved in sn-glycerol-3-phosphate (G3P) import. Responsible for energy coupling to the transport system. The protein is sn-glycerol-3-phosphate import ATP-binding protein UgpC of Rhodopseudomonas palustris (strain HaA2).